The following is a 528-amino-acid chain: Phosphoenolpyruvate carboxykinase (ATP) (528 aa).

The substrate site is built by R56, Y192, and K198. ATP contacts are provided by residues K198, H217, and 233-241 (GLSGTGKTT). Mn(2+)-binding residues include K198 and H217. Position 254 (D254) interacts with Mn(2+). Residues E282, R319, and T444 each coordinate ATP. Residue R319 participates in substrate binding.

Belongs to the phosphoenolpyruvate carboxykinase (ATP) family. Requires Mn(2+) as cofactor.

Its subcellular location is the cytoplasm. It catalyses the reaction oxaloacetate + ATP = phosphoenolpyruvate + ADP + CO2. Its pathway is carbohydrate biosynthesis; gluconeogenesis. Involved in the gluconeogenesis. Catalyzes the conversion of oxaloacetate (OAA) to phosphoenolpyruvate (PEP) through direct phosphoryl transfer between the nucleoside triphosphate and OAA. This chain is Phosphoenolpyruvate carboxykinase (ATP), found in Bacillus cytotoxicus (strain DSM 22905 / CIP 110041 / 391-98 / NVH 391-98).